A 671-amino-acid polypeptide reads, in one-letter code: DNA ligase (671 aa).

Residues 32–36 (DAEYD), 81–82 (SL), and E113 each bind NAD(+). K115 functions as the N6-AMP-lysine intermediate in the catalytic mechanism. Residues R136, E173, K290, and K314 each coordinate NAD(+). Zn(2+) is bound by residues C408, C411, C426, and C432. Positions 593-671 (EIDSPFAGKT…ETEMLRLLGS (79 aa)) constitute a BRCT domain.

Belongs to the NAD-dependent DNA ligase family. LigA subfamily. Mg(2+) is required as a cofactor. Mn(2+) serves as cofactor.

It catalyses the reaction NAD(+) + (deoxyribonucleotide)n-3'-hydroxyl + 5'-phospho-(deoxyribonucleotide)m = (deoxyribonucleotide)n+m + AMP + beta-nicotinamide D-nucleotide.. Functionally, DNA ligase that catalyzes the formation of phosphodiester linkages between 5'-phosphoryl and 3'-hydroxyl groups in double-stranded DNA using NAD as a coenzyme and as the energy source for the reaction. It is essential for DNA replication and repair of damaged DNA. The chain is DNA ligase from Escherichia coli O127:H6 (strain E2348/69 / EPEC).